The primary structure comprises 173 residues: Streptothricin acetyltransferase A (173 aa).

In terms of domain architecture, N-acetyltransferase spans 21–173 (VVFGRMIPAF…EIAIFWYYKF (153 aa)).

It belongs to the acetyltransferase family. GNAT subfamily. In terms of assembly, homodimer.

It carries out the reaction streptothricin D + acetyl-CoA = N(beta)-acetylstreptothricin D + CoA + H(+). The catalysed reaction is streptothricin F + acetyl-CoA = N(beta)-acetylstreptothricin F + CoA + H(+). In terms of biological role, involved in resistance to streptothricin, a broad-spectrum antibiotic produced by streptomycetes. Detoxifies streptothricin via acetylation of the beta amino group of the first beta-lysyl moiety of streptothricin. The chain is Streptothricin acetyltransferase A from Bacillus subtilis (strain 168).